A 506-amino-acid chain; its full sequence is MEACCSDLEVDINGEQTIFLNKQIICAYSGTLRKLLGKSTSSSGNLKVIFNDFPGGAESFEFVSRFCYNDGRVAVMPSNVVFLHCAAKFMEVTKVLEQTEKCMEEIRYWAWPEVLLCLKQCQEVETSPEVDSLAAKLMDALVEKLCLTIEMSPSSAGSACSPDSSLFRFSCDSKSTESFKNCSVRLTWWFDEVLVLSSGLVEMFLKLMVLRKFDNLIISRFLFYYQKVKFCSASSHEKRKILETIIDTLCVLDRSCVPCKSLFAVLRLALGLNINKSCMNKLEVMIGHQLDQATLDNLLVPSPSKSSHLYYVNLVLRFTKAFLDGARSGLQLKKVSSLIDQYIAEVAPDPCLKPSKFLSLITLVPDSARESHEDIYRAIDMYLEAHTGTTDGEKLNLIRTLSYEKLSGESRAHISRNQKFQAIETLDEQQQQQQQQQQQKQLILRMEKVETSGENEKLKEHIEGIQWRVMELERACLKMQNQMEVIKKRSKSSSKGSNRSLPKLCS.

A BTB domain is found at 6–76 (SDLEVDINGE…CYNDGRVAVM (71 aa)). The region spanning 187–435 (TWWFDEVLVL…LDEQQQQQQQ (249 aa)) is the NPH3 domain. The stretch at 421 to 492 (QAIETLDEQQ…MEVIKKRSKS (72 aa)) forms a coiled coil. The tract at residues 485 to 506 (VIKKRSKSSSKGSNRSLPKLCS) is disordered.

Belongs to the NPH3 family.

It functions in the pathway protein modification; protein ubiquitination. Its function is as follows. May act as a substrate-specific adapter of an E3 ubiquitin-protein ligase complex (CUL3-RBX1-BTB) which mediates the ubiquitination and subsequent proteasomal degradation of target proteins. The polypeptide is BTB/POZ domain-containing protein At3g22104 (Arabidopsis thaliana (Mouse-ear cress)).